Consider the following 102-residue polypeptide: MSNTTVPNAPQANSDSMVGYVLGPFFLITLVGVVVAVVMYVQKKKRVDRLRHHLLPMYSYDPAEELQEAEQELLSDVGDPKVVHGWQSSYQHKRMPLLDIKT.

A glycan (N-linked (GlcNAc...) asparagine) is linked at Asn-3. The helical transmembrane segment at 21–41 (VLGPFFLITLVGVVVAVVMYV) threads the bilayer.

It is found in the membrane. In Mus musculus (Mouse), this protein is Small integral membrane protein 29.